Here is a 166-residue protein sequence, read N- to C-terminus: Crossover junction endodeoxyribonuclease RuvC (166 aa).

Catalysis depends on residues D7, E67, and D140. Mg(2+) contacts are provided by D7, E67, and D140.

Belongs to the RuvC family. In terms of assembly, homodimer which binds Holliday junction (HJ) DNA. The HJ becomes 2-fold symmetrical on binding to RuvC with unstacked arms; it has a different conformation from HJ DNA in complex with RuvA. In the full resolvosome a probable DNA-RuvA(4)-RuvB(12)-RuvC(2) complex forms which resolves the HJ. Mg(2+) is required as a cofactor.

The protein localises to the cytoplasm. It carries out the reaction Endonucleolytic cleavage at a junction such as a reciprocal single-stranded crossover between two homologous DNA duplexes (Holliday junction).. The RuvA-RuvB-RuvC complex processes Holliday junction (HJ) DNA during genetic recombination and DNA repair. Endonuclease that resolves HJ intermediates. Cleaves cruciform DNA by making single-stranded nicks across the HJ at symmetrical positions within the homologous arms, yielding a 5'-phosphate and a 3'-hydroxyl group; requires a central core of homology in the junction. The consensus cleavage sequence is 5'-(A/T)TT(C/G)-3'. Cleavage occurs on the 3'-side of the TT dinucleotide at the point of strand exchange. HJ branch migration catalyzed by RuvA-RuvB allows RuvC to scan DNA until it finds its consensus sequence, where it cleaves and resolves the cruciform DNA. The protein is Crossover junction endodeoxyribonuclease RuvC of Brevibacillus brevis (strain 47 / JCM 6285 / NBRC 100599).